The following is a 385-amino-acid chain: MSIIRSERYSAIFLLCSAALAIIFANVLDPDTWHAVHSAVSEYHIFGLITPHDIVADFLLAVFFFAVAIELKHELVKGELSSFSKAIIPGVCAAGGILVPISIYLSVASVLPNGWPVPTATDVAFSLGILAIFGSSLPSKVRIFLLALAVLDDLAGIVIIATAFSVSISYWWIIVACITVGLFGFCSYRLARCKTSKTFLIIPAMLLCALAAWVSVYQSGIHATIAGVMLGIMLNRKQGAAIEHALEPYINGIILPAFAFLAAMVRVPHLPLDEISPALWGILLGLLFGKLLGISVFGIIALKFFRKKSISFFNLLVVSALGGIGFTVSLLMNELAFLGTPVHEQGVIAVLIGSLLSAILAIILMRCYKGRKSKSLPGTKGRVSH.

Helical transmembrane passes span 9 to 29 (YSAIFLLCSAALAIIFANVLD), 45 to 65 (IFGLITPHDIVADFLLAVFFF), 87 to 107 (IIPGVCAAGGILVPISIYLSV), 114 to 134 (GWPVPTATDVAFSLGILAIFG), 155 to 175 (AGIVIIATAFSVSISYWWIIV), 198 to 218 (TFLIIPAMLLCALAAWVSVYQ), 220 to 235 (GIHATIAGVMLGIMLN), 245 to 265 (ALEPYINGIILPAFAFLAAMV), 282 to 302 (ILLGLLFGKLLGISVFGIIAL), 312 to 332 (FFNLLVVSALGGIGFTVSLLM), and 345 to 365 (QGVIAVLIGSLLSAILAIILM).

This sequence belongs to the NhaA Na(+)/H(+) (TC 2.A.33) antiporter family.

The protein localises to the cell membrane. The catalysed reaction is Na(+)(in) + 2 H(+)(out) = Na(+)(out) + 2 H(+)(in). Functionally, na(+)/H(+) antiporter that extrudes sodium in exchange for external protons. The protein is Na(+)/H(+) antiporter NhaA of Tropheryma whipplei (strain Twist) (Whipple's bacillus).